The sequence spans 173 residues: Alpha-crystallin A chain (173 aa).

At M1 the chain carries N-acetylmethionine. The interval 1–63 is required for complex formation with BFSP1 and BFSP2; it reads MDIAIQHPWF…RTVLDSGVSE (63 aa). The residue at position 6 (Q6) is a Deamidated glutamine; partial. S45 bears the Phosphoserine mark. Q50 carries the post-translational modification Deamidated glutamine; partial. Residues 52–162 enclose the sHSP domain; it reads LFRTVLDSGV…GHSERAIPVS (111 aa). N6-acetyllysine is present on K70. Zn(2+) is bound at residue H79. Residue Q90 is modified to Deamidated glutamine; partial. The residue at position 99 (K99) is an N6-acetyllysine. Residue H100 participates in Zn(2+) binding. Residue N101 is modified to Deamidated asparagine; partial. Positions 102 and 107 each coordinate Zn(2+). Phosphoserine is present on S122. N123 bears the Deamidated asparagine; partial mark. Residues 144–173 form a disordered region; the sequence is PKVPSGVDAGHSERAIPVSREEKPSSAPTS. The segment covering 153 to 167 has biased composition (basic and acidic residues); the sequence is GHSERAIPVSREEKP. H154 contacts Zn(2+). An O-linked (GlcNAc) serine glycan is attached at S162.

This sequence belongs to the small heat shock protein (HSP20) family. Heteromer composed of three CRYAA and one CRYAB subunits. Inter-subunit bridging via zinc ions enhances stability, which is crucial as there is no protein turn over in the lens. Can also form homodimers and homotetramers (dimers of dimers) which serve as the building blocks of homooligomers. Within homooligomers, the zinc-binding motif is created from residues of 3 different molecules. His-100 and Glu-102 from one molecule are ligands of the zinc ion, and His-107 and His-154 residues from additional molecules complete the site with tetrahedral coordination geometry. Part of a complex required for lens intermediate filament formation composed of BFSP1, BFSP2 and CRYAA. Post-translationally, acetylation at Lys-70 may increase chaperone activity. In terms of processing, undergoes age-dependent proteolytical cleavage at the C-terminus.

The protein localises to the cytoplasm. It localises to the nucleus. Functionally, contributes to the transparency and refractive index of the lens. Acts as a chaperone, preventing aggregation of various proteins under a wide range of stress conditions. Required for the correct formation of lens intermediate filaments as part of a complex composed of BFSP1, BFSP2 and CRYAA. In Sus scrofa (Pig), this protein is Alpha-crystallin A chain (CRYAA).